Consider the following 317-residue polypeptide: tRNA pseudouridine synthase B (317 aa).

Catalysis depends on Asp-47, which acts as the Nucleophile.

This sequence belongs to the pseudouridine synthase TruB family. Type 1 subfamily.

It catalyses the reaction uridine(55) in tRNA = pseudouridine(55) in tRNA. Responsible for synthesis of pseudouridine from uracil-55 in the psi GC loop of transfer RNAs. This is tRNA pseudouridine synthase B from Shewanella sp. (strain MR-4).